We begin with the raw amino-acid sequence, 916 residues long: Translation initiation factor IF-2 (916 aa).

The interval 55–324 (EPKAVTPTSK…NHNANLKPVT (270 aa)) is disordered. A compositionally biased stretch (low complexity) spans 77–88 (AAEPKAAATKPA). Composition is skewed to basic and acidic residues over residues 98-121 (FKAEREARAKAEAERRQNNGERRN), 129-161 (RQKDNRNHGSQDRRNDNRNNRNRQNDNRRDNRN), and 198-212 (RQSETRFHEAQEAKR). The span at 227–250 (KEQPTVEAAATAAPQAQPQTVEQV) shows a compositional bias: low complexity. Residues 264–281 (ARPDKSRDFSHENEDGPK) are compositionally biased toward basic and acidic residues. Residues 291–304 (KQNQVRNQKNSNWN) are compositionally biased toward low complexity. The span at 305 to 314 (KKNKKSKNNR) shows a compositional bias: basic residues. Residues 418-585 (ERAPVVTIMG…TVLLVAEIQE (168 aa)) form the tr-type G domain. A G1 region spans residues 427-434 (GHVDHGKT). 427 to 434 (GHVDHGKT) contributes to the GTP binding site. The interval 452 to 456 (GITQH) is G2. The segment at 473 to 476 (DTPG) is G3. Residues 473-477 (DTPGH) and 527-530 (NKID) each bind GTP. The tract at residues 527–530 (NKID) is G4. Positions 563–565 (SAK) are G5.

It belongs to the TRAFAC class translation factor GTPase superfamily. Classic translation factor GTPase family. IF-2 subfamily.

The protein localises to the cytoplasm. Its function is as follows. One of the essential components for the initiation of protein synthesis. Protects formylmethionyl-tRNA from spontaneous hydrolysis and promotes its binding to the 30S ribosomal subunits. Also involved in the hydrolysis of GTP during the formation of the 70S ribosomal complex. The polypeptide is Translation initiation factor IF-2 (Streptococcus mutans serotype c (strain ATCC 700610 / UA159)).